An 856-amino-acid chain; its full sequence is Structure-specific endonuclease subunit SLX4 (856 aa).

Residues 1–19 show a composition bias toward polar residues; that stretch reads MDNAAIASQSNTPPSNGRS. Disordered regions lie at residues 1-24, 39-61, 88-121, 139-201, 296-326, 362-392, 621-640, 653-688, and 715-742; these read MDNA…ARFV, IEPS…SKSP, VDSP…HKMA, KTRK…TDNE, GIQT…KKPQ, KKMG…GNGP, SKSS…SQGD, RSDS…SNEG, and DSVG…QDCD. Residues 51-60 show a composition bias toward low complexity; the sequence is STLLTSLSKS. The segment covering 139–152 has biased composition (basic residues); that stretch reads KTRKKKAATAKRTR. Polar residues predominate over residues 296–309; sequence GIQTPTESRPATND. Over residues 673-686 the composition is skewed to polar residues; the sequence is SVKSQESKSFSLSN.

Belongs to the SLX4 family. As to quaternary structure, forms a heterodimer with SLX1. Post-translationally, phosphorylated in response to DNA damage.

The protein localises to the nucleus. In terms of biological role, regulatory subunit of the SLX1-SLX4 structure-specific endonuclease that resolves DNA secondary structures generated during DNA repair and recombination. Has endonuclease activity towards branched DNA substrates, introducing single-strand cuts in duplex DNA close to junctions with ss-DNA. This is Structure-specific endonuclease subunit SLX4 from Ajellomyces dermatitidis (strain ER-3 / ATCC MYA-2586) (Blastomyces dermatitidis).